A 332-amino-acid polypeptide reads, in one-letter code: MSQVVVCALYKFVSLPNFESIQKPLLAHMESAGIKGTLLLASEGINGTVAGSQLAIDNLLQWLAKQDGLDSIVHKLSFDETMPFYRTKVKLKKEIVTMGVEGIDPLKVVGTYVKPKDWNQLISDPEVLLVDTRNEYEVQIGTFKNAVDPKTDTFREFPAYVKEHLDPAKHKKVAMFCTGGIRCEKSTAYLKEQGFDEVYHLEGGVLKYLEEVKQEESLWEGECFVFDNRVAVNHALEKGQYDQCNACRMPITELEKASEAFVQGVSCPHCIDNISEKQRQRFEERERQMQLAAKRGEAHIGSDVGAVIQSRRDNKENLKKSQVKLNNKKYNK.

Residues 123–217 (SDPEVLLVDT…YLEEVKQEES (95 aa)) form the Rhodanese domain. Cys177 serves as the catalytic Cysteine persulfide intermediate. The segment at 302–332 (SDVGAVIQSRRDNKENLKKSQVKLNNKKYNK) is disordered. Residues 310–319 (SRRDNKENLK) are compositionally biased toward basic and acidic residues.

It belongs to the TrhO family.

The enzyme catalyses uridine(34) in tRNA + AH2 + O2 = 5-hydroxyuridine(34) in tRNA + A + H2O. Functionally, catalyzes oxygen-dependent 5-hydroxyuridine (ho5U) modification at position 34 in tRNAs. The polypeptide is tRNA uridine(34) hydroxylase (Shewanella woodyi (strain ATCC 51908 / MS32)).